The sequence spans 449 residues: NADH-quinone oxidoreductase subunit D (449 aa).

It belongs to the complex I 49 kDa subunit family. In terms of assembly, NDH-1 is composed of 14 different subunits. Subunits NuoB, C, D, E, F, and G constitute the peripheral sector of the complex.

The protein resides in the cell membrane. It carries out the reaction a quinone + NADH + 5 H(+)(in) = a quinol + NAD(+) + 4 H(+)(out). Functionally, NDH-1 shuttles electrons from NADH, via FMN and iron-sulfur (Fe-S) centers, to quinones in the respiratory chain. The immediate electron acceptor for the enzyme in this species is believed to be a menaquinone. Couples the redox reaction to proton translocation (for every two electrons transferred, four hydrogen ions are translocated across the cytoplasmic membrane), and thus conserves the redox energy in a proton gradient. The polypeptide is NADH-quinone oxidoreductase subunit D (Saccharopolyspora erythraea (strain ATCC 11635 / DSM 40517 / JCM 4748 / NBRC 13426 / NCIMB 8594 / NRRL 2338)).